A 287-amino-acid chain; its full sequence is MGLDNLKVGLAQMLKGGVIMDVVTPDQAKIAEDAGAVAVMALEKIPSDIRASGGVSRMSDPGLIERVMDSVSIPVMAKVRIGHFAEAQILQSLKVDYIDESEVLSVADSSYHIDKRKFTVPFVCGATNLGEALRRISEGASMIRSKGEAGTGDIAQATKHIRAILSEISALTQAREDELPARARELGAPIDLVRETARLGRLPVVLFTAGGIATPADSSLVMQLGSDGVFVGSGIFKSEDPKAYAAAIVQATAQYDDADLLARVSRNLGQAMPGVSNLDVRFSSRGV.

D21 serves as a coordination point for D-ribose 5-phosphate. K78 (schiff-base intermediate with D-ribose 5-phosphate) is an active-site residue. G150 is a binding site for D-ribose 5-phosphate. D-glyceraldehyde 3-phosphate is bound at residue R162. D-ribose 5-phosphate-binding positions include G211 and 232 to 233; that span reads GS.

Belongs to the PdxS/SNZ family. As to quaternary structure, in the presence of PdxT, forms a dodecamer of heterodimers.

It catalyses the reaction aldehydo-D-ribose 5-phosphate + D-glyceraldehyde 3-phosphate + L-glutamine = pyridoxal 5'-phosphate + L-glutamate + phosphate + 3 H2O + H(+). It participates in cofactor biosynthesis; pyridoxal 5'-phosphate biosynthesis. Its function is as follows. Catalyzes the formation of pyridoxal 5'-phosphate from ribose 5-phosphate (RBP), glyceraldehyde 3-phosphate (G3P) and ammonia. The ammonia is provided by the PdxT subunit. Can also use ribulose 5-phosphate and dihydroxyacetone phosphate as substrates, resulting from enzyme-catalyzed isomerization of RBP and G3P, respectively. The chain is Pyridoxal 5'-phosphate synthase subunit PdxS from Tropheryma whipplei (strain TW08/27) (Whipple's bacillus).